A 1167-amino-acid polypeptide reads, in one-letter code: RNA-directed RNA polymerase (1167 aa).

Residues 553 to 735 (LTYGILAEAT…KALASYTGLE (183 aa)) form the RdRp catalytic domain.

Belongs to the reoviridae RNA-directed RNA polymerase family. Interacts with VP3 (Potential). Interacts with VP2 (Potential). Interacts with NSP5; this interaction is probably necessary for the formation of functional virus factories.

Its subcellular location is the virion. It catalyses the reaction RNA(n) + a ribonucleoside 5'-triphosphate = RNA(n+1) + diphosphate. In terms of biological role, RNA-directed RNA polymerase that is involved in both transcription and genome replication. Together with VP3 capping enzyme, forms an enzyme complex positioned near the channels situated at each of the five-fold vertices of the core. Following infection, the outermost layer of the virus is lost, leaving a double-layered particle (DLP) made up of the core and VP6 shell. VP1 then catalyzes the transcription of fully conservative plus-strand genomic RNAs that are extruded through the DLP's channels into the cytoplasm where they function as mRNAs for translation of viral proteins. One copy of each of the viral (+)RNAs is also recruited during core assembly, together with newly synthesized polymerase complexes and VP2. The polymerase of these novo-formed particles catalyzes the synthesis of complementary minus-strands leading to dsDNA formation. To do so, the polymerase specifically recognizes conserved 3' sequence(s) in plus-strand RNA templates. Once dsRNA synthesis is complete, the polymerase switches to the transcriptional mode, thus providing secondary transcription. The polypeptide is RNA-directed RNA polymerase (Rotavirus X (strain RVX/Human/China/NADRV-J19/1997/GXP[X]) (RV ADRV-N)).